The chain runs to 1036 residues: Isoleucine--tRNA ligase (1036 aa).

A 'HIGH' region motif is present at residues 48–58 (PTANGKPHVGH). A 'KMSKS' region motif is present at residues 590–594 (KMSKS). K593 provides a ligand contact to ATP.

The protein belongs to the class-I aminoacyl-tRNA synthetase family. IleS type 2 subfamily. In terms of assembly, monomer. Zn(2+) is required as a cofactor.

Its subcellular location is the cytoplasm. It carries out the reaction tRNA(Ile) + L-isoleucine + ATP = L-isoleucyl-tRNA(Ile) + AMP + diphosphate. Catalyzes the attachment of isoleucine to tRNA(Ile). As IleRS can inadvertently accommodate and process structurally similar amino acids such as valine, to avoid such errors it has two additional distinct tRNA(Ile)-dependent editing activities. One activity is designated as 'pretransfer' editing and involves the hydrolysis of activated Val-AMP. The other activity is designated 'posttransfer' editing and involves deacylation of mischarged Val-tRNA(Ile). The polypeptide is Isoleucine--tRNA ligase (Clostridium tetani (strain Massachusetts / E88)).